Here is an 85-residue protein sequence, read N- to C-terminus: UPF0386 protein MXAN_1729 (85 aa).

It belongs to the UPF0386 family.

This chain is UPF0386 protein MXAN_1729, found in Myxococcus xanthus (strain DK1622).